The chain runs to 243 residues: MTMRTATITEFSSSYRSLPGLLHLLQFGDSALPIGGFSFSNGLESAIQQNLVHDKETLREFTLTAMNQAATSDGIALLTAHRAARADDRGALQVIDKAVFERKLNEETRLMTVRMGRKLCELSASIIDDRLNRDWLECIKTAETPGTHPVSLGLAFAALDVDGRDAFGAQQYGVATTILGAALRLMRVSFMDTQKILLEATSTVAPAYEEIADAGIEDMASFAPMVDILAAVHVKGHVRMFMN.

This sequence belongs to the UreF family. In terms of assembly, ureD, UreF and UreG form a complex that acts as a GTP-hydrolysis-dependent molecular chaperone, activating the urease apoprotein by helping to assemble the nickel containing metallocenter of UreC. The UreE protein probably delivers the nickel.

The protein resides in the cytoplasm. In terms of biological role, required for maturation of urease via the functional incorporation of the urease nickel metallocenter. Functionally, disrupting the ure2 operon has no effect on urease activity or pathogen survival in BALB/c mice when administered orally. The polypeptide is Urease accessory protein UreF 2 (Brucella abortus (strain 2308)).